The sequence spans 86 residues: Cell division topological specificity factor (86 aa).

The protein belongs to the MinE family.

In terms of biological role, prevents the cell division inhibition by proteins MinC and MinD at internal division sites while permitting inhibition at polar sites. This ensures cell division at the proper site by restricting the formation of a division septum at the midpoint of the long axis of the cell. The chain is Cell division topological specificity factor from Alteromonas mediterranea (strain DSM 17117 / CIP 110805 / LMG 28347 / Deep ecotype).